Consider the following 1419-residue polypeptide: Formin-1 (1419 aa).

Residues 1-622 are microtubule-binding; the sequence is MEGTHCTLQL…TAEPQHQSPP (622 aa). 4 disordered regions span residues 138–194, 262–331, 343–641, and 685–711; these read DWQG…MGKD, LGRE…KVVA, VVKT…TPKD, and SLTE…DTEE. The span at 151–163 shows a compositional bias: basic residues; that stretch reads RSTHGNKKPRRSS. Basic and acidic residues predominate over residues 298–317; the sequence is SHQDPEKHPEAEKDEMEKPA. A compositionally biased stretch (polar residues) spans 394–411; it reads RSSQSPAGETASISSVSA. A compositionally biased stretch (basic and acidic residues) spans 425–438; sequence IESEKLDEAPEGKR. The interval 456–842 is mediates interaction with alpha-catenin; the sequence is NKRRAGLPLG…LNISSLSQLS (387 aa). A compositionally biased stretch (polar residues) spans 504 to 517; sequence FNNSASQSSTHKQT. Residues 520 to 529 are compositionally biased toward pro residues; the sequence is VPSPLSPRLP. Polar residues predominate over residues 614–623; that stretch reads AEPQHQSPPG. A compositionally biased stretch (basic and acidic residues) spans 685-694; that stretch reads SLTEQDDRTP. Positions 720–774 form a coiled coil; that stretch reads AEYQAAILHLKREHKEEIENLQAQFELRAFHIRGEHAMITARLEETIENLKHELE. Disordered regions lie at residues 859 to 978 and 1390 to 1419; these read GMAS…AIEP and SEKK…VTTN. Composition is skewed to pro residues over residues 868–882 and 890–958; these read LPPP…PPLP and PAPP…PPPG. The 88-residue stretch at 870–957 folds into the FH1 domain; the sequence is PPPASIPPPP…PPGLAPPPPP (88 aa). The FH2 domain occupies 972 to 1388; it reads RKPAIEPSCP…KMAQESVSKL (417 aa).

This sequence belongs to the formin homology family. Cappuccino subfamily. In terms of assembly, interacts with alpha-catenin and may interact with tubulin. Post-translationally, phosphorylated on serine and possibly threonine residues.

The protein resides in the nucleus. It localises to the cytoplasm. It is found in the cell junction. The protein localises to the adherens junction. Its subcellular location is the cell membrane. Its function is as follows. Plays a role in the formation of adherens junction and the polymerization of linear actin cables. This chain is Formin-1 (FMN1), found in Homo sapiens (Human).